The sequence spans 930 residues: Protein translocase subunit SecA (930 aa).

ATP-binding positions include glutamine 87, 105-109 (GEGKT), and aspartate 515. Zn(2+) is bound by residues cysteine 914, cysteine 916, cysteine 925, and histidine 926.

The protein belongs to the SecA family. In terms of assembly, monomer and homodimer. Part of the essential Sec protein translocation apparatus which comprises SecA, SecYEG and auxiliary proteins SecDF-YajC and YidC. Requires Zn(2+) as cofactor.

The protein localises to the cell inner membrane. The protein resides in the cytoplasm. The enzyme catalyses ATP + H2O + cellular proteinSide 1 = ADP + phosphate + cellular proteinSide 2.. Functionally, part of the Sec protein translocase complex. Interacts with the SecYEG preprotein conducting channel. Has a central role in coupling the hydrolysis of ATP to the transfer of proteins into and across the cell membrane, serving both as a receptor for the preprotein-SecB complex and as an ATP-driven molecular motor driving the stepwise translocation of polypeptide chains across the membrane. This chain is Protein translocase subunit SecA, found in Cupriavidus metallidurans (strain ATCC 43123 / DSM 2839 / NBRC 102507 / CH34) (Ralstonia metallidurans).